Here is a 351-residue protein sequence, read N- to C-terminus: Phenylacetaldoxime dehydratase (351 aa).

The protein belongs to the heme-containing dehydratase family. As to quaternary structure, monomer. Requires heme b as cofactor.

The enzyme catalyses (Z)-phenylacetaldehyde oxime = phenylacetonitrile + H2O. In terms of biological role, catalyzes the stoichiometric dehydration of Z-phenylacetaldoxime to phenylacetonitrile. Prefers the Z-form of phenylacetaldoxime over its E-isomer. This chain is Phenylacetaldoxime dehydratase, found in Bacillus sp. (strain OxB-1).